Here is a 412-residue protein sequence, read N- to C-terminus: POU domain, class 4, transcription factor 2 (412 aa).

Positions L29–P96 are disordered. A compositionally biased stretch (low complexity) spans S31 to A53. 2 stretches are compositionally biased toward gly residues: residues G54–R70 and G78–S87. Residues C94–H240 are required for transcriptional activation. The short motif at R113–I122 is the POU-IV box element. A disordered region spans residues V123 to L191. The span at K127 to P138 shows a compositional bias: basic residues. The segment covering P152–A169 has biased composition (low complexity). A compositionally biased stretch (basic residues) spans T173 to P187. The Nuclear speckle targeting signal signature appears at H174–H188. Positions A241–I412 are required for DNA-binding and transcriptional repression. The POU-specific domain maps to D253–E330. The homeobox DNA-binding region spans K348–K407.

The protein belongs to the POU transcription factor family. Class-4 subfamily. In terms of assembly, interacts with POU4F1; this interaction inhibits both POU4F1 DNA-binding and transcriptional activities. Interacts (C-terminus) with ESR1 (via DNA-binding domain); this interaction increases the estrogen receptor ESR1 transcriptional activity in a DNA- and ligand 17-beta-estradiol-independent manner. Interacts (via C-terminus) with TP53 (via N-terminus). Interacts with DLX1 (via homeobox DNA-binding domain); this interaction suppresses DLX1-mediated transcriptional activity in postnatal retina enhancing retinal ganglion cell (RGC) differentiation. Interacts with DLX2 (via homeobox DNA-binding domain); this interaction enhances RGC differentiation. Interacts (via C-terminus) with ISL1 (via C-terminus). Interacts with ISL2. Interacts with LHX2. In terms of tissue distribution, expressed in the heart, brain and spinal cord. Expressed in cardiomyocytes (at protein level). Expressed in brain and spinal cord. Expressed in dorsal root ganglion (RGD) neurons.

It localises to the nucleus. Its subcellular location is the nucleus speckle. The protein resides in the cytoplasm. Functionally, tissue-specific DNA-binding transcription factor involved in the development and differentiation of target cells. Functions either as activator or repressor modulating the rate of target gene transcription through RNA polymerase II enzyme in a promoter-dependent manner. Binds to the consensus octamer motif 5'-AT[A/T]A[T/A]T[A/T]A-3' of promoter of target genes. Plays a fundamental role in the gene regulatory network essential for retinal ganglion cell (RGC) differentiation. Binds to an octamer site to form a ternary complex with ISL1; cooperates positively with ISL1 and ISL2 to potentiate transcriptional activation of RGC target genes being involved in RGC fate commitment in the developing retina and RGC axon formation and pathfinding. Inhibits DLX1 and DLX2 transcriptional activities preventing DLX1- and DLX2-mediated ability to promote amacrine cell fate specification. In cooperation with TP53 potentiates transcriptional activation of BAX promoter activity increasing neuronal cell apoptosis. Negatively regulates BAX promoter activity in the absence of TP53. Acts as a transcriptional coactivator via its interaction with the transcription factor ESR1 by enhancing its effect on estrogen response element (ERE)-containing promoter. Antagonizes the transcriptional stimulatory activity of POU4F1 by preventing its binding to an octamer motif. Involved in TNFSF11-mediated terminal osteoclast differentiation. In Rattus norvegicus (Rat), this protein is POU domain, class 4, transcription factor 2.